Reading from the N-terminus, the 245-residue chain is UDP-2,3-diacylglucosamine hydrolase (245 aa).

Mn(2+)-binding residues include D8, H10, D41, N80, and H115. 80–81 (NR) is a binding site for substrate. D123, S161, K165, K168, and H196 together coordinate substrate. The Mn(2+) site is built by H196 and H198.

The protein belongs to the LpxH family. Mn(2+) serves as cofactor.

The protein localises to the cell inner membrane. The catalysed reaction is UDP-2-N,3-O-bis[(3R)-3-hydroxytetradecanoyl]-alpha-D-glucosamine + H2O = 2-N,3-O-bis[(3R)-3-hydroxytetradecanoyl]-alpha-D-glucosaminyl 1-phosphate + UMP + 2 H(+). Its pathway is glycolipid biosynthesis; lipid IV(A) biosynthesis; lipid IV(A) from (3R)-3-hydroxytetradecanoyl-[acyl-carrier-protein] and UDP-N-acetyl-alpha-D-glucosamine: step 4/6. Functionally, hydrolyzes the pyrophosphate bond of UDP-2,3-diacylglucosamine to yield 2,3-diacylglucosamine 1-phosphate (lipid X) and UMP by catalyzing the attack of water at the alpha-P atom. Involved in the biosynthesis of lipid A, a phosphorylated glycolipid that anchors the lipopolysaccharide to the outer membrane of the cell. This chain is UDP-2,3-diacylglucosamine hydrolase, found in Psychromonas ingrahamii (strain DSM 17664 / CCUG 51855 / 37).